The following is a 548-amino-acid chain: Poly(ADP-ribose) glycohydrolase 1 (548 aa).

This sequence belongs to the poly(ADP-ribose) glycohydrolase family.

It carries out the reaction [(1''-&gt;2')-ADP-alpha-D-ribose](n) + H2O = [(1''-&gt;2')-ADP-alpha-D-ribose](n-1) + ADP-D-ribose. Poly(ADP-ribose) synthesized after DNA damage is only present transiently and is rapidly degraded by poly(ADP-ribose) glycohydrolase. Involved in establishing period length of the circadian oscillator. May regulate post-translational poly(ADP-ribosyl)ation of an oscillator component. This chain is Poly(ADP-ribose) glycohydrolase 1 (PARG1), found in Arabidopsis thaliana (Mouse-ear cress).